The chain runs to 455 residues: Golgi pH regulator (455 aa).

2 helical membrane-spanning segments follow: residues 5-25 and 46-66; these read ADSV…WLFF and VTFA…LGLL. Residue Asn67 is glycosylated (N-linked (GlcNAc...) asparagine). A run of 3 helical transmembrane segments spans residues 79-99, 111-131, and 150-170; these read LCVI…YFVV, LFSC…GDPF, and VGVI…VNCP. Residue Asn180 is glycosylated (N-linked (GlcNAc...) asparagine). 4 consecutive transmembrane segments (helical) span residues 290–310, 343–363, 378–398, and 425–445; these read GYFF…NIVF, ISFI…LITL, VIVL…VLLI, and WFDV…YLAH.

The protein belongs to the Golgi pH regulator (TC 1.A.38) family. Homotrimer.

The protein localises to the golgi apparatus membrane. It carries out the reaction iodide(out) = iodide(in). The enzyme catalyses chloride(in) = chloride(out). The catalysed reaction is bromide(in) = bromide(out). It catalyses the reaction fluoride(in) = fluoride(out). Its function is as follows. Voltage-gated channel that enables the transfer of anions such as iodide, chloride, bromide and fluoride which may function in counter-ion conductance and participates in Golgi acidification. The chain is Golgi pH regulator (gpr89-b) from Xenopus laevis (African clawed frog).